The sequence spans 116 residues: ATP-dependent Clp protease adapter protein ClpS (116 aa).

Residues 1–11 (MRRINTIMQGK) show a composition bias toward polar residues. A disordered region spans residues 1–23 (MRRINTIMQGKTNGGNGPESGTV).

Belongs to the ClpS family. In terms of assembly, binds to the N-terminal domain of the chaperone ClpA.

Functionally, involved in the modulation of the specificity of the ClpAP-mediated ATP-dependent protein degradation. The sequence is that of ATP-dependent Clp protease adapter protein ClpS from Brucella abortus (strain S19).